A 1052-amino-acid polypeptide reads, in one-letter code: CCAAT/enhancer-binding protein zeta (1052 aa).

Disordered stretches follow at residues 1–40 (MSAD…KNGF), 122–158 (VENK…VSKA), and 621–677 (SQLD…AEKP). A compositionally biased stretch (acidic residues) spans 23–34 (EDPDEEDEEDGD). The segment covering 122-150 (VENKKQKATEGKKTSEKKVKNKTVAEQRP) has biased composition (basic and acidic residues). A compositionally biased stretch (acidic residues) spans 627-643 (PESDEENFVDVGDDSDD). Phosphoserine is present on residues Ser629 and Ser641. Residues 644–677 (EKFTDADKGTATDAVKEVESKETEPESSAEAEKP) show a composition bias toward basic and acidic residues. Ser837 carries the phosphoserine modification. Positions 876 to 969 (KGAKADLEDS…QGQKKKKKSF (94 aa)) are disordered. Over residues 883–932 (EDSESSDGELGDLDDDEVSLGSMNDEDFEIDEDGGTFMDVSDDESEDAPE) the composition is skewed to acidic residues. 3 positions are modified to phosphoserine: Ser958, Ser972, and Ser977. The disordered stretch occupies residues 1032–1052 (KKKKNFRKKMKAPQKPKRQRK).

It belongs to the CBF/MAK21 family. In terms of tissue distribution, ubiquitous.

Its subcellular location is the nucleus. In terms of biological role, stimulates transcription from the HSP70 promoter. The polypeptide is CCAAT/enhancer-binding protein zeta (Cebpz) (Mus musculus (Mouse)).